Reading from the N-terminus, the 323-residue chain is tRNA U34 carboxymethyltransferase (323 aa).

Carboxy-S-adenosyl-L-methionine is bound by residues Lys91, Trp105, Lys110, Gly130, Asp152–Ser154, Ile181–Glu182, Met196, Tyr200, and Arg315.

It belongs to the class I-like SAM-binding methyltransferase superfamily. CmoB family. Homotetramer.

The catalysed reaction is carboxy-S-adenosyl-L-methionine + 5-hydroxyuridine(34) in tRNA = 5-carboxymethoxyuridine(34) in tRNA + S-adenosyl-L-homocysteine + H(+). Functionally, catalyzes carboxymethyl transfer from carboxy-S-adenosyl-L-methionine (Cx-SAM) to 5-hydroxyuridine (ho5U) to form 5-carboxymethoxyuridine (cmo5U) at position 34 in tRNAs. This is tRNA U34 carboxymethyltransferase from Vibrio vulnificus (strain CMCP6).